Reading from the N-terminus, the 918-residue chain is Leucine--tRNA ligase (918 aa).

Positions 40 to 51 (PYPSGVGLHVGH) match the 'HIGH' region motif. The short motif at 692 to 696 (KMSKS) is the 'KMSKS' region element. Lys695 serves as a coordination point for ATP.

Belongs to the class-I aminoacyl-tRNA synthetase family.

The protein localises to the cytoplasm. The catalysed reaction is tRNA(Leu) + L-leucine + ATP = L-leucyl-tRNA(Leu) + AMP + diphosphate. In Azobacteroides pseudotrichonymphae genomovar. CFP2, this protein is Leucine--tRNA ligase.